A 979-amino-acid polypeptide reads, in one-letter code: MHC class II regulatory factor RFX1 (979 aa).

3 disordered regions span residues 1 to 136, 181 to 227, and 370 to 405; these read MATQ…QVVQ, QSAA…PTGT, and TSTG…STGG. Over residues 12-44 the composition is skewed to pro residues; it reads APPPSQPPQAPPQAQPQPPPPPPPAAPQPPQPP. Over residues 45–73 the composition is skewed to low complexity; sequence TAAATPQPQYVTELQSPQPQAQPPGGQKQ. The residue at position 60 (Ser60) is a Phosphoserine. A compositionally biased stretch (pro residues) spans 81–96; sequence VPAPSQPTGAPTPSPA. Polar residues predominate over residues 114 to 126; sequence ETVSEASPGSTAS. Positions 127–136 are enriched in low complexity; the sequence is QTGVPTQVVQ. Polar residues-rich tracts occupy residues 190 to 203 and 209 to 220; these read GQVS…QQVH and SPVQANSSSSKT. The span at 370-379 shows a compositional bias: low complexity; that stretch reads TSTGAGASNS. Over residues 380 to 405 the composition is skewed to gly residues; sequence SGGGGSGGGGGGGGGGGGGGSGSTGG. The RFX-type winged-helix DNA-binding region spans 438–513; that stretch reads TVQWLLDNYE…YHYYGLRIKA (76 aa). Positions 744-979 are necessary for dimerization; sequence FAQTLRRYTS…GLFVQALPSS (236 aa). The tract at residues 915–960 is disordered; sequence SLNPLDPDKDEEEEEEEESEDELPQDISLAAGGESPALGPETLEPP. The segment covering 922 to 938 has biased composition (acidic residues); the sequence is DKDEEEEEEEESEDELP. A phosphoserine mark is found at Ser978 and Ser979.

The protein belongs to the RFX family. As to quaternary structure, homodimer; binds DNA as a homodimer. Heterodimer; heterodimerizes with RFX2 and RFX3.

It is found in the nucleus. In terms of biological role, regulatory factor essential for MHC class II genes expression. Binds to the X boxes of MHC class II genes. Also binds to an inverted repeat (ENH1) required for hepatitis B virus genes expression and to the most upstream element (alpha) of the RPL30 promoter. This Homo sapiens (Human) protein is MHC class II regulatory factor RFX1 (RFX1).